We begin with the raw amino-acid sequence, 278 residues long: Complement component 1 Q subcomponent-binding protein, mitochondrial (278 aa).

Residues 1–70 constitute a mitochondrion transit peptide; sequence MFQLLRCVPR…PCACGCGCSG (70 aa). Positions 73–90 are C1q binding; that stretch reads TEGDKAFVDFLSDEIKEE. Ser-84 carries the post-translational modification Phosphoserine. N6-acetyllysine occurs at positions 88 and 91. The segment at 136–164 is disordered; sequence IPPAFGGEEEEPSQGQKAEEQEPELTSTP. The segment at 166 to 209 is interaction with MAVS; sequence FVVEVTKDGSSKALVLDCHYPEDEIGQEDDQSDIFSIKEVSFQA. At Tyr-185 the chain carries Phosphotyrosine. 2 positions are modified to phosphoserine: Ser-197 and Ser-201. Thr-210 bears the Phosphothreonine mark.

It belongs to the MAM33 family. Homotrimer; three monomers form a donut-shaped structure with an unusually asymmetric charge distribution on the surface. Interacts with CDK13, HRK, VTN, NFYB, ADRA1B, FOXC1, DDX21, DDX50, NCL, SRSF1 and SRSF9. Interacts with CD93; the association may represent a cell surface C1q receptor. Interacts with KRT1; the association represents a cell surface kininogen receptor. Interacts with CD209; the interaction is indicative for a C1q:C1QBP:CD209 signaling complex. Interacts with FBL and RRP1; the respective interactions with C1QBP are competitive. Probably associates with the mitoribosome. Interacts with MAVS; the interaction occurs upon viral transfection. Interacts with PPIF. Interacts with U2AF1L4. Interacts with PLEKHN1. Interacts with VGF-derived peptide TLQP-21. Interacts with MRE11 and RAD50; forming the MRC (MRE11-RAD50-C1QBP) complex that inhibits the activity of MRE11.

The protein resides in the mitochondrion matrix. It is found in the nucleus. Its subcellular location is the cell membrane. The protein localises to the secreted. It localises to the cytoplasm. The protein resides in the nucleolus. In terms of biological role, multifunctional and multicompartmental protein involved in inflammation and infection processes, ribosome biogenesis, protein synthesis in mitochondria, regulation of apoptosis, transcriptional regulation and pre-mRNA splicing. At the cell surface is thought to act as an endothelial receptor for plasma proteins of the complement and kallikrein-kinin cascades. Putative receptor for C1q; specifically binds to the globular 'heads' of C1q thus inhibiting C1; may perform the receptor function through a complex with C1qR/CD93. In complex with cytokeratin-1/KRT1 is a high affinity receptor for kininogen-1/HMWK. Can also bind other plasma proteins, such as coagulation factor XII leading to its autoactivation. May function to bind initially fluid kininogen-1 to the cell membrane. The secreted form may enhance both extrinsic and intrinsic coagulation pathways. It is postulated that the cell surface form requires docking with transmembrane proteins for downstream signaling which might be specific for a cell-type or response. By acting as C1q receptor is involved in chemotaxis of immature dendritic cells and neutrophils and is proposed to signal through CD209/DC-SIGN on immature dendritic cells, through integrin alpha-4/beta-1 during trophoblast invasion of the decidua, and through integrin beta-1 during endothelial cell adhesion and spreading. Signaling involved in inhibition of innate immune response is implicating the PI3K-AKT/PKB pathway. Required for protein synthesis in mitochondria. In mitochondrial translation may be involved in formation of functional 55S mitoribosomes; the function seems to involve its RNA-binding activity. Acts as a RNA modification reader, which specifically recognizes and binds mitochondrial RNAs modified by C5-methylcytosine (m5C) in response to stress, and promotes recruitment of the mitochondrial degradosome complex, leading to their degradation. May be involved in the nucleolar ribosome maturation process; the function may involve the exchange of FBL for RRP1 in the association with pre-ribosome particles. Involved in regulation of RNA splicing by inhibiting the RNA-binding capacity of SRSF1 and its phosphorylation. Is required for the nuclear translocation of splicing factor U2AF1L4. Involved in regulation of CDKN2A- and HRK-mediated apoptosis. Stabilizes mitochondrial CDKN2A isoform smARF. May be involved in regulation of FOXC1 transcriptional activity and NFY/CCAAT-binding factor complex-mediated transcription. May play a role in antibacterial defense as it can bind to cell surface hyaluronan and inhibit Streptococcus pneumoniae hyaluronate lyase. May be involved in modulation of the immune response; ligation by HCV core protein is resulting in suppression of interleukin-12 production in monocyte-derived dendritic cells. Involved in regulation of antiviral response by inhibiting RIGI- and IFIH1-mediated signaling pathways probably involving its association with MAVS after viral infection. Acts as a regulator of DNA repair via homologous recombination by inhibiting the activity of MRE11: interacts with unphosphorylated MRE11 and RAD50 in absence of DNA damage, preventing formation and activity of the MRN complex. Following DNA damage, dissociates from phosphorylated MRE11, allowing formation of the MRN complex. This Bos taurus (Bovine) protein is Complement component 1 Q subcomponent-binding protein, mitochondrial (C1QBP).